The following is a 445-amino-acid chain: Coronin-A (445 aa).

WD repeat units lie at residues 77–117 (GHKS…LTDS), 127–167 (GHKR…NLTT), 170–209 (GHSDMITSCEWNHNGSQIVTTCKDKKARVFDPRTNSIVNE), and 259–299 (DSAS…PYIH). Positions 410–444 (KNEKELREEYEKLKIRVAYLESEIVKKDAKIKELT) form a coiled coil.

The protein belongs to the WD repeat coronin family. Binds to F-actin.

It localises to the cell surface. Its function is as follows. Required for normal motility. Participates in cytokinesis. In Dictyostelium discoideum (Social amoeba), this protein is Coronin-A (corA).